Consider the following 125-residue polypeptide: Calcitonin receptor-stimulating peptide 1 (125 aa).

The first 25 residues, 1–25 (MGFWKFPPFLVLSILVLYQAGMFHA), serve as a signal peptide directing secretion. A propeptide spanning residues 26-77 (APFRSVFDGRFDPATLDEEESRLLLAAMVNDYEQMRARESEKAQKTEGSRIQ) is cleaved from the precursor. Cysteine 81 and cysteine 86 are disulfide-bonded.

The protein belongs to the calcitonin family.

The protein resides in the secreted. Functionally, stimulates cAMP production in porcine kidney cell line LLC-PK1 via the calcitonin receptor (CT) but not via the CT-like (CL) receptor. The protein is Calcitonin receptor-stimulating peptide 1 (CRSP1) of Bos taurus (Bovine).